Consider the following 217-residue polypeptide: Probable transaldolase (217 aa).

Lys-83 functions as the Schiff-base intermediate with substrate in the catalytic mechanism.

Belongs to the transaldolase family. Type 3B subfamily.

It localises to the cytoplasm. The enzyme catalyses D-sedoheptulose 7-phosphate + D-glyceraldehyde 3-phosphate = D-erythrose 4-phosphate + beta-D-fructose 6-phosphate. It participates in carbohydrate degradation; pentose phosphate pathway; D-glyceraldehyde 3-phosphate and beta-D-fructose 6-phosphate from D-ribose 5-phosphate and D-xylulose 5-phosphate (non-oxidative stage): step 2/3. Transaldolase is important for the balance of metabolites in the pentose-phosphate pathway. The chain is Probable transaldolase from Fervidobacterium nodosum (strain ATCC 35602 / DSM 5306 / Rt17-B1).